We begin with the raw amino-acid sequence, 136 residues long: DNA-directed RNA polymerase subunit omega (136 aa).

The protein belongs to the RNA polymerase subunit omega family. As to quaternary structure, the RNAP catalytic core consists of 2 alpha, 1 beta, 1 beta' and 1 omega subunit. When a sigma factor is associated with the core the holoenzyme is formed, which can initiate transcription.

The catalysed reaction is RNA(n) + a ribonucleoside 5'-triphosphate = RNA(n+1) + diphosphate. Functionally, promotes RNA polymerase assembly. Latches the N- and C-terminal regions of the beta' subunit thereby facilitating its interaction with the beta and alpha subunits. The sequence is that of DNA-directed RNA polymerase subunit omega from Methylorubrum extorquens (strain CM4 / NCIMB 13688) (Methylobacterium extorquens).